We begin with the raw amino-acid sequence, 201 residues long: UPF0323 lipoprotein Cj0371 (201 aa).

The first 26 residues, 1–26 (MKKIKKIIQIGMIGGLAAVAGGALAG), serve as a signal peptide directing secretion. Cys-27 is lipidated: N-palmitoyl cysteine. Cys-27 carries the S-diacylglycerol cysteine lipid modification. The segment at 169-201 (NKAGTTSSASSAKKSGFFGGGSKATSSSSSFGS) is disordered. Composition is skewed to low complexity over residues 170–184 (KAGTTSSASSAKKSG) and 191–201 (KATSSSSSFGS).

This sequence belongs to the UPF0323 family.

The protein localises to the cell membrane. The protein is UPF0323 lipoprotein Cj0371 of Campylobacter jejuni subsp. jejuni serotype O:2 (strain ATCC 700819 / NCTC 11168).